Consider the following 1029-residue polypeptide: uncharacterized protein (1029 aa).

The span at 1–23 shows a compositional bias: basic and acidic residues; it reads MREWCMLRESRTNTPRRAAERGK. The disordered stretch occupies residues 1-31; the sequence is MREWCMLRESRTNTPRRAAERGKRPGGSSVR. The Guanylate cyclase domain occupies 39 to 168; sequence TALCYDLVGS…AALAMAARLQ (130 aa). Position 261-268 (261-268) interacts with ATP; sequence GDAGIGKS.

This is an uncharacterized protein from Rhizobium meliloti (strain 1021) (Ensifer meliloti).